An 876-amino-acid polypeptide reads, in one-letter code: Alanine--tRNA ligase (876 aa).

Lysine 74 carries the N6-acetyllysine modification. Residues histidine 564, histidine 568, cysteine 666, and histidine 670 each contribute to the Zn(2+) site.

This sequence belongs to the class-II aminoacyl-tRNA synthetase family. In terms of assembly, homotetramer. Zn(2+) is required as a cofactor.

Its subcellular location is the cytoplasm. It catalyses the reaction tRNA(Ala) + L-alanine + ATP = L-alanyl-tRNA(Ala) + AMP + diphosphate. Functionally, catalyzes the attachment of alanine to tRNA(Ala) in a two-step reaction: alanine is first activated by ATP to form Ala-AMP and then transferred to the acceptor end of tRNA(Ala). Also edits incorrectly charged Ser-tRNA(Ala) and Gly-tRNA(Ala) via its editing domain. The protein is Alanine--tRNA ligase of Shigella boydii serotype 18 (strain CDC 3083-94 / BS512).